The chain runs to 153 residues: UPF0266 membrane protein YPTB1631 (153 aa).

The next 3 membrane-spanning stretches (helical) occupy residues 6 to 26 (LVLV…EFIM), 45 to 65 (LDCM…VMAH), and 67 to 87 (APLT…ISYI).

The protein belongs to the UPF0266 family.

The protein resides in the cell inner membrane. This chain is UPF0266 membrane protein YPTB1631, found in Yersinia pseudotuberculosis serotype I (strain IP32953).